A 439-amino-acid chain; its full sequence is Trigger factor (439 aa).

Residues 175–260 (GDRVTISYRS…VERLSVKDEI (86 aa)) form the PPIase FKBP-type domain.

The protein belongs to the FKBP-type PPIase family. Tig subfamily.

The protein localises to the cytoplasm. The enzyme catalyses [protein]-peptidylproline (omega=180) = [protein]-peptidylproline (omega=0). In terms of biological role, involved in protein export. Acts as a chaperone by maintaining the newly synthesized protein in an open conformation. Functions as a peptidyl-prolyl cis-trans isomerase. This Anaplasma phagocytophilum (strain HZ) protein is Trigger factor.